The sequence spans 306 residues: tRNA pseudouridine synthase B (306 aa).

The active-site Nucleophile is the Asp39.

Belongs to the pseudouridine synthase TruB family. Type 1 subfamily.

The enzyme catalyses uridine(55) in tRNA = pseudouridine(55) in tRNA. In terms of biological role, responsible for synthesis of pseudouridine from uracil-55 in the psi GC loop of transfer RNAs. This Arthrobacter sp. (strain FB24) protein is tRNA pseudouridine synthase B.